A 207-amino-acid chain; its full sequence is Ribosome maturation factor RimM (207 aa).

The PRC barrel domain maps to 114–207 (DDEYYWVDLI…RIDSDWPLDY (94 aa)).

It belongs to the RimM family. As to quaternary structure, binds ribosomal protein uS19.

It is found in the cytoplasm. Functionally, an accessory protein needed during the final step in the assembly of 30S ribosomal subunit, possibly for assembly of the head region. Essential for efficient processing of 16S rRNA. May be needed both before and after RbfA during the maturation of 16S rRNA. It has affinity for free ribosomal 30S subunits but not for 70S ribosomes. The chain is Ribosome maturation factor RimM from Bordetella bronchiseptica (strain ATCC BAA-588 / NCTC 13252 / RB50) (Alcaligenes bronchisepticus).